A 623-amino-acid polypeptide reads, in one-letter code: V-type proton ATPase catalytic subunit A (623 aa).

252–259 (GAFGCGKT) contributes to the ATP binding site.

The protein belongs to the ATPase alpha/beta chains family. As to quaternary structure, V-ATPase is a heteromultimeric enzyme composed of a peripheral catalytic V1 complex (main components: subunits A, B, C, D, E, and F) attached to an integral membrane V0 proton pore complex (main component: the proteolipid protein).

It catalyses the reaction ATP + H2O + 4 H(+)(in) = ADP + phosphate + 5 H(+)(out). Functionally, catalytic subunit of the peripheral V1 complex of vacuolar ATPase. V-ATPase vacuolar ATPase is responsible for acidifying a variety of intracellular compartments in eukaryotic cells. This chain is V-type proton ATPase catalytic subunit A, found in Beta vulgaris (Sugar beet).